The chain runs to 521 residues: Signal recognition particle protein (521 aa).

GTP-binding positions include 107–114, 196–200, and 254–257; these read GLQGSGKT, DTAGR, and TKLD. Residues 436 to 505 are disordered; it reads GGMGIPGMGR…MPDGLNELPP (70 aa). Residues 447-462 show a composition bias toward basic residues; that stretch reads SATRKSKGGKGKKRAR.

Belongs to the GTP-binding SRP family. SRP54 subfamily. Part of the signal recognition particle protein translocation system, which is composed of SRP and FtsY.

It is found in the cytoplasm. The enzyme catalyses GTP + H2O = GDP + phosphate + H(+). Functionally, involved in targeting and insertion of nascent membrane proteins into the cytoplasmic membrane. Binds to the hydrophobic signal sequence of the ribosome-nascent chain (RNC) as it emerges from the ribosomes. The SRP-RNC complex is then targeted to the cytoplasmic membrane where it interacts with the SRP receptor FtsY. In Mycobacterium leprae (strain TN), this protein is Signal recognition particle protein.